The chain runs to 217 residues: tRNA (guanine-N(7)-)-methyltransferase (217 aa).

The S-adenosyl-L-methionine site is built by E44, D69, D96, and D118. D118 is an active-site residue. K122 provides a ligand contact to substrate. An interaction with RNA region spans residues 124–129; that stretch reads RHEKRR. Residues D154 and 193–196 contribute to the substrate site; that span reads TEYE.

The protein belongs to the class I-like SAM-binding methyltransferase superfamily. TrmB family.

It catalyses the reaction guanosine(46) in tRNA + S-adenosyl-L-methionine = N(7)-methylguanosine(46) in tRNA + S-adenosyl-L-homocysteine. Its pathway is tRNA modification; N(7)-methylguanine-tRNA biosynthesis. Its function is as follows. Catalyzes the formation of N(7)-methylguanine at position 46 (m7G46) in tRNA. The protein is tRNA (guanine-N(7)-)-methyltransferase of Lactococcus lactis subsp. lactis (strain IL1403) (Streptococcus lactis).